The chain runs to 397 residues: Proteinase-activated receptor 2 (397 aa).

The N-terminal stretch at Met1–Thr25 is a signal peptide. The N-linked (GlcNAc...) asparagine glycan is linked to Asn23. Residues Val26–Arg36 constitute a propeptide, removed for receptor activation. At Ser37–Gly71 the chain is on the extracellular side. A helical membrane pass occupies residues Lys72–Phe101. Over Phe102–His108 the chain is Cytoplasmic. Residues Pro109–His137 traverse the membrane as a helical segment. The Extracellular portion of the chain corresponds to Gly138–Lys149. A disulfide bridge links Cys148 with Cys226. A helical membrane pass occupies residues Val150–Ile177. The Cytoplasmic segment spans residues Val178–His183. Residues Ser184–Val211 traverse the membrane as a helical segment. The Extracellular segment spans residues Met212–Leu235. A glycan (N-linked (GlcNAc...) asparagine) is linked at Asn222. A helical membrane pass occupies residues Val236–Leu269. At Arg270–His277 the chain is on the cytoplasmic side. A helical membrane pass occupies residues Ser278–Gln317. Residues Arg318–Tyr323 lie on the Extracellular side of the membrane. Residues Ala324–Val347 traverse the membrane as a helical segment. The Cytoplasmic portion of the chain corresponds to Ser348–Tyr397. The S-palmitoyl cysteine moiety is linked to residue Cys361.

Belongs to the G-protein coupled receptor 1 family. Interacts with TLR4, COPS5 and TMED2. Interacts with GNAQ, GNA11, GNA12, GNA13 and GNA14. A proteolytic cleavage generates a new N-terminus that functions as a tethered ligand. Activating serine proteases include trypsin, mast cell tryptase, coagulation factors VII and Xa, myeloblastin/PRTN3 and membrane-type serine protease 1/ST14. Proposed subsequent cleavage by serine proteases is leading to receptor deactivation and include neutrophil elastase and cathepsin G. At least in part, implicated proteases are also shown to activate the receptor; the glycosylation status of the receptor is thought to contribute to the difference. In terms of processing, N-glycosylated and sialylated. Post-translationally, multiple phosphorylated on serine and threonine residues in the cytoplasmic region upon receptor activation; required for receptor desensitization and recruitment of beta-arrestin. Monoubiquitinated by Cbl at the plasma membrane and in early endosomes; not required for receptor endocytosis but for translocation to late endosomes or lysosomes. Deubiquitination involves Stambp and Usp8; required for lysosomal trafficking and receptor degradation.

The protein localises to the cell membrane. In terms of biological role, receptor for trypsin and trypsin-like enzymes coupled to G proteins. Its function is mediated through the activation of several signaling pathways including phospholipase C (PLC), intracellular calcium, mitogen-activated protein kinase (MAPK), I-kappaB kinase/NF-kappaB and Rho. Can also be transactivated by cleaved F2R/PAR1. Involved in modulation of inflammatory responses and regulation of innate and adaptive immunity, and acts as a sensor for proteolytic enzymes generated during infection. Generally is promoting inflammation. Can signal synergistically with TLR4 and probably TLR2 in inflammatory responses and modulates Tlr3 signaling. Has a protective role in establishing the endothelial barrier; the activity involves coagulation factor X. Regulates endothelial cell barrier integrity during neutrophil extravasation, probably following proteolytic cleavage by PRTN3. Proposed to have a bronchoprotective role in airway epithelium, but also shown to compromise the airway epithelial barrier by interrupting E-cadherin adhesion. Involved in the regulation of vascular tone; activation results in hypotension presumably mediated by vasodilation. Associates with a subset of G proteins alpha subunits such as GNAQ, GNA11, GNA14, GNA12 and GNA13, but probably not with G(o)-alpha, G(i) subunit alpha-1 and G(i) subunit alpha-2. Believed to be a class B receptor which internalizes as a complex with arrestin and traffic with it to endosomal vesicles, presumably as desensitized receptor, for extended periods of time. Mediates inhibition of TNF-alpha stimulated JNK phosphorylation via coupling to G GNAQ and GNA11; the function involves dissociation of RIPK1 and Tradd from TNFR1. Mediates phosphorylation of nuclear factor NF-kappa-B RELA subunit at 'Ser-536'; the function involves Ikbkb and is predominantly independent of G proteins. Involved in cellular migration. Involved in cytoskeletal rearrangement and chemotaxis through beta-arrestin-promoted scaffolds; the function is independent of GNAQ and GNA11 and involves promotion of cofilin dephosphorylation and actin filament severing. Induces redistribution of COPS5 from the plasma membrane to the cytosol and activation of the JNK cascade is mediated by Cops5. Involved in the recruitment of leukocytes to the sites of inflammation and is the major PAR receptor capable of modulating eosinophil function such as pro-inflammatory cytokine secretion, superoxide production and degranulation. During inflammation promotes dendritic cell maturation, trafficking to the lymph nodes and subsequent T-cell activation. Involved in antimicrobial response of innate immune cells; activation enhances phagocytosis of Gram-positive and killing of Gram-negative bacteria. Acts synergistically with interferon-gamma in enhancing antiviral responses. Probably mediates activation of pro-inflammatory and pro-fibrotic responses in fibroblasts, triggered by coagulation factor Xa (F10). Probably mediates activation of barrier protective signaling responses in endothelial cells, triggered by coagulation factor Xa (F10). The chain is Proteinase-activated receptor 2 (F2rl1) from Rattus norvegicus (Rat).